Here is a 182-residue protein sequence, read N- to C-terminus: Large ribosomal subunit protein bL17m (182 aa).

It belongs to the bacterial ribosomal protein bL17 family.

Its subcellular location is the mitochondrion. The sequence is that of Large ribosomal subunit protein bL17m (mrpl17) from Dictyostelium discoideum (Social amoeba).